The following is a 145-amino-acid chain: 3-dehydroquinate dehydratase 1 (145 aa).

Y24 functions as the Proton acceptor in the catalytic mechanism. Substrate is bound by residues N75, H81, and D88. H101 acts as the Proton donor in catalysis. Residues 102–103 and R112 contribute to the substrate site; that span reads IS.

The protein belongs to the type-II 3-dehydroquinase family. Homododecamer.

It carries out the reaction 3-dehydroquinate = 3-dehydroshikimate + H2O. It functions in the pathway metabolic intermediate biosynthesis; chorismate biosynthesis; chorismate from D-erythrose 4-phosphate and phosphoenolpyruvate: step 3/7. Catalyzes a trans-dehydration via an enolate intermediate. The sequence is that of 3-dehydroquinate dehydratase 1 (aroQ1) from Agrobacterium fabrum (strain C58 / ATCC 33970) (Agrobacterium tumefaciens (strain C58)).